The following is a 628-amino-acid chain: Eukaryotic peptide chain release factor GTP-binding subunit ERF3B (628 aa).

Residues 1–10 are compositionally biased toward low complexity; sequence MDSGSSSSDS. 3 disordered regions span residues 1-49, 72-124, and 146-195; these read MDSG…SAFS, FLRG…LEGS, and LEES…VIVP. The tr-type G domain occupies 201 to 425; that stretch reads KEHVNVVFIG…YLDNLPNFNR (225 aa). The interval 210–217 is G1; sequence GHVDAGKS. 213–218 is a GTP binding site; sequence DAGKST. A G2 region spans residues 266–270; the sequence is GKTVE. The interval 287–290 is G3; it reads DAPG. Residues 349 to 352 and 391 to 393 contribute to the GTP site; these read NKMD and SGL. Residues 349–352 are G4; that stretch reads NKMD. Residues 391–393 form a G5 region; it reads SGL.

This sequence belongs to the TRAFAC class translation factor GTPase superfamily. Classic translation factor GTPase family. ERF3 subfamily. As to quaternary structure, component of the eRF1-eRF3-GTP ternary complex, composed of ETF1/ERF1 and ERF3 (GSPT1/ERF3A or GSPT2/ERF3B) and GTP. Component of the transient SURF (SMG1-UPF1-eRF1-eRF3) complex. Interacts with UPF1 and PABPC1. As to expression, highly expressed in IUCC stage II colorectal cancer (CRC).

Its subcellular location is the cytoplasm. The catalysed reaction is GTP + H2O = GDP + phosphate + H(+). Its function is as follows. GTPase component of the eRF1-eRF3-GTP ternary complex, a ternary complex that mediates translation termination in response to the termination codons UAA, UAG and UGA. GSPT2/ERF3B mediates ETF1/ERF1 delivery to stop codons: The eRF1-eRF3-GTP complex binds to a stop codon in the ribosomal A-site. GTP hydrolysis by GSPT2/ERF3B induces a conformational change that leads to its dissociation, permitting ETF1/ERF1 to accommodate fully in the A-site. Component of the transient SURF complex which recruits UPF1 to stalled ribosomes in the context of nonsense-mediated decay (NMD) of mRNAs containing premature stop codons. In Homo sapiens (Human), this protein is Eukaryotic peptide chain release factor GTP-binding subunit ERF3B (GSPT2).